The chain runs to 125 residues: Large ribosomal subunit protein bL12 (125 aa).

This sequence belongs to the bacterial ribosomal protein bL12 family. In terms of assembly, homodimer. Part of the ribosomal stalk of the 50S ribosomal subunit. Forms a multimeric L10(L12)X complex, where L10 forms an elongated spine to which 2 to 4 L12 dimers bind in a sequential fashion. Binds GTP-bound translation factors.

In terms of biological role, forms part of the ribosomal stalk which helps the ribosome interact with GTP-bound translation factors. Is thus essential for accurate translation. In Thermoanaerobacter sp. (strain X514), this protein is Large ribosomal subunit protein bL12.